Reading from the N-terminus, the 309-residue chain is 2-phospho-L-lactate transferase (309 aa).

7,8-didemethyl-8-hydroxy-5-deazariboflavin contacts are provided by Asp-50 and Lys-89.

The protein belongs to the CofD family. In terms of assembly, homodimer. Mg(2+) is required as a cofactor.

The enzyme catalyses (2S)-lactyl-2-diphospho-5'-guanosine + 7,8-didemethyl-8-hydroxy-5-deazariboflavin = oxidized coenzyme F420-0 + GMP + H(+). The protein operates within cofactor biosynthesis; coenzyme F420 biosynthesis. In terms of biological role, catalyzes the transfer of the 2-phospholactate moiety from (2S)-lactyl-2-diphospho-5'-guanosine to 7,8-didemethyl-8-hydroxy-5-deazariboflavin (FO) with the formation of oxidized coenzyme F420-0 and GMP. The protein is 2-phospho-L-lactate transferase of Methanococcus maripaludis (strain C6 / ATCC BAA-1332).